Consider the following 122-residue polypeptide: Large ribosomal subunit protein uL14 (122 aa).

It belongs to the universal ribosomal protein uL14 family. In terms of assembly, part of the 50S ribosomal subunit. Forms a cluster with proteins L3 and L19. In the 70S ribosome, L14 and L19 interact and together make contacts with the 16S rRNA in bridges B5 and B8.

In terms of biological role, binds to 23S rRNA. Forms part of two intersubunit bridges in the 70S ribosome. The protein is Large ribosomal subunit protein uL14 of Rhizobium meliloti (strain 1021) (Ensifer meliloti).